A 498-amino-acid polypeptide reads, in one-letter code: Membrane-bound lytic murein transglycosylase F (498 aa).

The N-terminal stretch at 1–29 (MFFKPDFRPRCAKWLIATGLFLMLGACVE) is a signal peptide. Residues 30–267 (KPTTLERVKE…RLKDRYYGHV (238 aa)) form a non-LT domain region. The tract at residues 268 to 498 (DVLGYVGAYT…SSSSTDESPL (231 aa)) is LT domain. The active site involves E314. The segment at 464 to 498 (VADGNLHVPGVDKTQPPVPPASPVPSSSSTDESPL) is disordered.

It in the N-terminal section; belongs to the bacterial solute-binding protein 3 family. The protein in the C-terminal section; belongs to the transglycosylase Slt family.

It is found in the cell outer membrane. The enzyme catalyses Exolytic cleavage of the (1-&gt;4)-beta-glycosidic linkage between N-acetylmuramic acid (MurNAc) and N-acetylglucosamine (GlcNAc) residues in peptidoglycan, from either the reducing or the non-reducing ends of the peptidoglycan chains, with concomitant formation of a 1,6-anhydrobond in the MurNAc residue.. In terms of biological role, murein-degrading enzyme that degrades murein glycan strands and insoluble, high-molecular weight murein sacculi, with the concomitant formation of a 1,6-anhydromuramoyl product. Lytic transglycosylases (LTs) play an integral role in the metabolism of the peptidoglycan (PG) sacculus. Their lytic action creates space within the PG sacculus to allow for its expansion as well as for the insertion of various structures such as secretion systems and flagella. This is Membrane-bound lytic murein transglycosylase F from Pseudomonas syringae pv. syringae (strain B728a).